The following is a 290-amino-acid chain: Light-independent protochlorophyllide reductase iron-sulfur ATP-binding protein (290 aa).

ATP is bound by residues 10 to 15 and K39; that span reads GIGKST. Residue S14 participates in Mg(2+) binding. Residues C95 and C129 each contribute to the [4Fe-4S] cluster site. 180 to 181 is an ATP binding site; sequence NR.

Belongs to the NifH/BchL/ChlL family. In terms of assembly, homodimer. Protochlorophyllide reductase is composed of three subunits; ChlL, ChlN and ChlB. [4Fe-4S] cluster is required as a cofactor.

The protein resides in the plastid. Its subcellular location is the chloroplast. It carries out the reaction chlorophyllide a + oxidized 2[4Fe-4S]-[ferredoxin] + 2 ADP + 2 phosphate = protochlorophyllide a + reduced 2[4Fe-4S]-[ferredoxin] + 2 ATP + 2 H2O. It participates in porphyrin-containing compound metabolism; chlorophyll biosynthesis (light-independent). Its function is as follows. Component of the dark-operative protochlorophyllide reductase (DPOR) that uses Mg-ATP and reduced ferredoxin to reduce ring D of protochlorophyllide (Pchlide) to form chlorophyllide a (Chlide). This reaction is light-independent. The L component serves as a unique electron donor to the NB-component of the complex, and binds Mg-ATP. The chain is Light-independent protochlorophyllide reductase iron-sulfur ATP-binding protein from Cycas taitungensis (Prince sago).